A 495-amino-acid chain; its full sequence is Aspartyl/glutamyl-tRNA(Asn/Gln) amidotransferase subunit B (495 aa).

This sequence belongs to the GatB/GatE family. GatB subfamily. Heterotrimer of A, B and C subunits.

The enzyme catalyses L-glutamyl-tRNA(Gln) + L-glutamine + ATP + H2O = L-glutaminyl-tRNA(Gln) + L-glutamate + ADP + phosphate + H(+). The catalysed reaction is L-aspartyl-tRNA(Asn) + L-glutamine + ATP + H2O = L-asparaginyl-tRNA(Asn) + L-glutamate + ADP + phosphate + 2 H(+). Allows the formation of correctly charged Asn-tRNA(Asn) or Gln-tRNA(Gln) through the transamidation of misacylated Asp-tRNA(Asn) or Glu-tRNA(Gln) in organisms which lack either or both of asparaginyl-tRNA or glutaminyl-tRNA synthetases. The reaction takes place in the presence of glutamine and ATP through an activated phospho-Asp-tRNA(Asn) or phospho-Glu-tRNA(Gln). The sequence is that of Aspartyl/glutamyl-tRNA(Asn/Gln) amidotransferase subunit B from Methanosarcina barkeri (strain Fusaro / DSM 804).